Consider the following 547-residue polypeptide: Riboflavin transporter RibJ (547 aa).

The Cytoplasmic portion of the chain corresponds to 1–11 (MLPSFTRKPAD). The helical transmembrane segment at 12-32 (HPIGYLVALSGLLMQLMSYGI) threads the bilayer. Residues 33-58 (DNSYSIFSEDMHNDPSLGFPSITAIS) lie on the Extracellular side of the membrane. The helical transmembrane segment at 59-79 (LGNSVSLGLSPAFGVLAGFCV) threads the bilayer. Residues 80–85 (DRLPPR) lie on the Cytoplasmic side of the membrane. The chain crosses the membrane as a helical span at residues 86–106 (FMMALSTILLFTGLWISSTLA). Over 107–108 (AN) the chain is Extracellular. The chain crosses the membrane as a helical span at residues 109-129 (IYVVTFTYCLFASIGTACMLS). The Cytoplasmic portion of the chain corresponds to 130–144 (PGAAATSSWFNRYQG). Residues 145 to 165 (LAMGINFAGGGIGSAIIPPLA) form a helical membrane-spanning segment. The Extracellular segment spans residues 166–175 (GKWVVAYGWR). Residues 176–196 (KAFQLMSIFCAIGVLATALSA) form a helical membrane-spanning segment. Over 197-344 (RRREPKRDDS…MFTLPFMGNF (148 aa)) the chain is Cytoplasmic. Positions 198–293 (RREPKRDDSS…EGLDVTEQSQ (96 aa)) are disordered. Positions 244-255 (NEGKEDVREMGR) are enriched in basic and acidic residues. Residues 345-365 (LCWFIYSWAFYSLIYAAVPYI) form a helical membrane-spanning segment. Topologically, residues 366–386 (SSMGKPGTVYAGVPPIPTDVA) are extracellular. Residues 387 to 407 (ATLFTFYGVFQVVGSVLVGWL) traverse the membrane as a helical segment. At 408 to 412 (ASLVT) the chain is on the cytoplasmic side. The helical transmembrane segment at 413–433 (AEFAYVFCATVGGIGCGLLAL) threads the bilayer. The Extracellular segment spans residues 434–437 (GRSY). The helical transmembrane segment at 438-458 (VAFALLLCIIGFCMAGMFAVM) threads the bilayer. The Cytoplasmic portion of the chain corresponds to 459 to 470 (PTLIATHLYGPN). The chain crosses the membrane as a helical span at residues 471–491 (LGFYFGAVFLAGVVGGFVAPP). The Extracellular portion of the chain corresponds to 492–505 (MQATIQLRNNGSYA). Residue Asn501 is glycosylated (N-linked (GlcNAc...) asparagine). The helical transmembrane segment at 506-526 (FVCVVMSVSMTLSALVCYATL) threads the bilayer. The Cytoplasmic segment spans residues 527–547 (WRSKRSGIVLAARKTKLVEIM).

This sequence belongs to the major facilitator superfamily. RibJ family.

The protein resides in the cell membrane. Functionally, transporter involved in riboflavin (vitamin B2) uptake. Also transports FMN and FAD. The chain is Riboflavin transporter RibJ from Trypanosoma brucei brucei (strain 927/4 GUTat10.1).